A 196-amino-acid polypeptide reads, in one-letter code: MANILLLDNFDSFTYNLVEQLRNKNSNVLIYRNTVDINTILNSIKKIRNPILMLSPGPSTPKNAGCMLNLIKKVKGEIPIVGICLGHQAIVEAYGGIIGYAGEIFHGKASLINHDGLEMFEGLPQPLPVARYHSLICNKIPKNFIINSYFNDMIMSVRNNLDYVCGFQFHPESILTTSGALLLEKIINWASLKYKG.

The Glutamine amidotransferase type-1 domain maps to 3 to 196 (NILLLDNFDS…INWASLKYKG (194 aa)). 57–59 (GPS) provides a ligand contact to L-glutamine. The Nucleophile; for GATase activity role is filled by C84. Residues Q88 and 134–135 (SL) each bind L-glutamine. Catalysis depends on for GATase activity residues H170 and E172.

Heterotetramer consisting of two non-identical subunits: a beta subunit (TrpG) and a large alpha subunit (TrpE).

It catalyses the reaction chorismate + L-glutamine = anthranilate + pyruvate + L-glutamate + H(+). It participates in amino-acid biosynthesis; L-tryptophan biosynthesis; L-tryptophan from chorismate: step 1/5. Functionally, part of a heterotetrameric complex that catalyzes the two-step biosynthesis of anthranilate, an intermediate in the biosynthesis of L-tryptophan. In the first step, the glutamine-binding beta subunit (TrpG) of anthranilate synthase (AS) provides the glutamine amidotransferase activity which generates ammonia as a substrate that, along with chorismate, is used in the second step, catalyzed by the large alpha subunit of AS (TrpE) to produce anthranilate. In the absence of TrpG, TrpE can synthesize anthranilate directly from chorismate and high concentrations of ammonia. The polypeptide is Anthranilate synthase component 2 (trpG) (Buchnera aphidicola subsp. Schizaphis graminum (strain Sg)).